A 430-amino-acid chain; its full sequence is Bifunctional protein GlmU (430 aa).

The tract at residues 1-223 is pyrophosphorylase; sequence MSISVVILAA…EEEFKGVNSK (223 aa). UDP-N-acetyl-alpha-D-glucosamine contacts are provided by residues 8–11, K22, and 81–82; these read LAAG and GT. Mg(2+) is bound at residue D102. UDP-N-acetyl-alpha-D-glucosamine-binding residues include G135, E149, N164, and N221. N221 provides a ligand contact to Mg(2+). Residues 224-244 form a linker region; the sequence is LDLARAEEIMQRRIKEALMMA. The N-acetyltransferase stretch occupies residues 245–430; the sequence is GVTMCLPETI…NFFYKFFGDK (186 aa). UDP-N-acetyl-alpha-D-glucosamine is bound by residues R308 and K325. Catalysis depends on H336, which acts as the Proton acceptor. Residues Y339 and N350 each contribute to the UDP-N-acetyl-alpha-D-glucosamine site. Residues A353, 359-360, S378, A396, and R413 each bind acetyl-CoA; that span reads NY.

This sequence in the N-terminal section; belongs to the N-acetylglucosamine-1-phosphate uridyltransferase family. In the C-terminal section; belongs to the transferase hexapeptide repeat family. In terms of assembly, homotrimer. The cofactor is Mg(2+).

It is found in the cytoplasm. It carries out the reaction alpha-D-glucosamine 1-phosphate + acetyl-CoA = N-acetyl-alpha-D-glucosamine 1-phosphate + CoA + H(+). The catalysed reaction is N-acetyl-alpha-D-glucosamine 1-phosphate + UTP + H(+) = UDP-N-acetyl-alpha-D-glucosamine + diphosphate. Its pathway is nucleotide-sugar biosynthesis; UDP-N-acetyl-alpha-D-glucosamine biosynthesis; N-acetyl-alpha-D-glucosamine 1-phosphate from alpha-D-glucosamine 6-phosphate (route II): step 2/2. It participates in nucleotide-sugar biosynthesis; UDP-N-acetyl-alpha-D-glucosamine biosynthesis; UDP-N-acetyl-alpha-D-glucosamine from N-acetyl-alpha-D-glucosamine 1-phosphate: step 1/1. It functions in the pathway bacterial outer membrane biogenesis; LPS lipid A biosynthesis. Functionally, catalyzes the last two sequential reactions in the de novo biosynthetic pathway for UDP-N-acetylglucosamine (UDP-GlcNAc). The C-terminal domain catalyzes the transfer of acetyl group from acetyl coenzyme A to glucosamine-1-phosphate (GlcN-1-P) to produce N-acetylglucosamine-1-phosphate (GlcNAc-1-P), which is converted into UDP-GlcNAc by the transfer of uridine 5-monophosphate (from uridine 5-triphosphate), a reaction catalyzed by the N-terminal domain. The sequence is that of Bifunctional protein GlmU from Sulfurovum sp. (strain NBC37-1).